The primary structure comprises 156 residues: Small ribosomal subunit protein uS7 (156 aa).

Belongs to the universal ribosomal protein uS7 family. Part of the 30S ribosomal subunit. Contacts proteins S9 and S11.

Functionally, one of the primary rRNA binding proteins, it binds directly to 16S rRNA where it nucleates assembly of the head domain of the 30S subunit. Is located at the subunit interface close to the decoding center, probably blocks exit of the E-site tRNA. The protein is Small ribosomal subunit protein uS7 of Synechococcus sp. (strain CC9311).